A 1241-amino-acid chain; its full sequence is ATP-dependent helicase/nuclease subunit A (1241 aa).

The UvrD-like helicase ATP-binding domain maps to 12 to 485 (SQWTDDQWKA…IDLAKNFRSR (474 aa)). 33–40 (AAAGSGKT) contacts ATP. Residues 505–805 (GEIDYDADAE…RIMTIHKSKG (301 aa)) form the UvrD-like helicase C-terminal domain.

The protein belongs to the helicase family. AddA subfamily. As to quaternary structure, heterodimer of AddA and AddB/RexB. It depends on Mg(2+) as a cofactor.

It carries out the reaction Couples ATP hydrolysis with the unwinding of duplex DNA by translocating in the 3'-5' direction.. The catalysed reaction is ATP + H2O = ADP + phosphate + H(+). In terms of biological role, the heterodimer acts as both an ATP-dependent DNA helicase and an ATP-dependent, dual-direction single-stranded exonuclease. Recognizes the chi site generating a DNA molecule suitable for the initiation of homologous recombination. The AddA nuclease domain is required for chi fragment generation; this subunit has the helicase and 3' -&gt; 5' nuclease activities. The polypeptide is ATP-dependent helicase/nuclease subunit A (Bacillus thuringiensis subsp. konkukian (strain 97-27)).